Consider the following 224-residue polypeptide: UPF0758 protein RSc2444 (224 aa).

Residues 102 to 224 (TLESPQSVKD…VYSFLEHGKM (123 aa)) enclose the MPN domain. The Zn(2+) site is built by H173, H175, and D186. The short motif at 173–186 (HNHPTGHVEPSESD) is the JAMM motif element.

It belongs to the UPF0758 family.

This is UPF0758 protein RSc2444 from Ralstonia nicotianae (strain ATCC BAA-1114 / GMI1000) (Ralstonia solanacearum).